The following is a 234-amino-acid chain: Peroxisomal coenzyme A diphosphatase ndx-8 (234 aa).

A Nudix hydrolase domain is found at 27 to 162 (EQDAGVLILL…TFLIDEFYMV (136 aa)). Residues 66-90 (GGMMDDEDGQNVRRTAIREAYEEVG) carry the Nudix box motif. E84 and E88 together coordinate Mg(2+). A helical transmembrane segment spans residues 170–190 (YPTTYGVTALMCIVVAIGLLG). The short motif at 232-234 (SKI) is the Microbody targeting signal element.

This sequence belongs to the Nudix hydrolase family. Mg(2+) serves as cofactor. Requires Mn(2+) as cofactor.

It is found in the peroxisome membrane. In terms of biological role, coenzyme A diphosphatase which mediates the cleavage of CoA into 3',5'-ADP and 4'-phosphopantetheine. In Caenorhabditis elegans, this protein is Peroxisomal coenzyme A diphosphatase ndx-8 (ndx-8).